The chain runs to 268 residues: Interleukin-1 beta (268 aa).

The propeptide occupies 1–116; it reads MATVPELTSE…TWDDYSLECD (116 aa).

The protein belongs to the IL-1 family. Monomer. In its precursor form, weakly interacts with full-length MEFV; the mature cytokine does not interact at all. Interacts with integrins ITGAV:ITGBV and ITGA5:ITGB1; integrin-binding is required for IL1B signaling. Interacts with cargo receptor TMED10; the interaction is direct and is required for the secretion of IL1B mature form. Interacts with HSP90AB1; the interaction facilitates cargo translocation into the ERGIC. Interacts with HSP90B1; the interaction facilitates cargo translocation into the ERGIC.

The protein resides in the cytoplasm. The protein localises to the cytosol. It localises to the secreted. It is found in the lysosome. Its subcellular location is the extracellular exosome. In terms of biological role, potent pro-inflammatory cytokine. Initially discovered as the major endogenous pyrogen, induces prostaglandin synthesis, neutrophil influx and activation, T-cell activation and cytokine production, B-cell activation and antibody production, and fibroblast proliferation and collagen production. Promotes Th17 differentiation of T-cells. Synergizes with IL12/interleukin-12 to induce IFNG synthesis from T-helper 1 (Th1) cells. Plays a role in angiogenesis by inducing VEGF production synergistically with TNF and IL6. Involved in transduction of inflammation downstream of pyroptosis: its mature form is specifically released in the extracellular milieu by passing through the gasdermin-D (GSDMD) pore. The protein is Interleukin-1 beta (IL1B) of Oryctolagus cuniculus (Rabbit).